A 504-amino-acid polypeptide reads, in one-letter code: Taurochenodeoxycholic 6 alpha-hydroxylase (504 aa).

A run of 2 helical transmembrane segments spans residues 6–26 (LASV…LLLL) and 110–130 (APVL…LLNG). C451 is a binding site for heme.

This sequence belongs to the cytochrome P450 family. The cofactor is heme. In terms of tissue distribution, primarily expressed in liver. Low expression in kidney.

Its subcellular location is the endoplasmic reticulum membrane. The enzyme catalyses taurochenodeoxycholate + reduced [NADPH--hemoprotein reductase] + O2 = taurohyocholate + oxidized [NADPH--hemoprotein reductase] + H2O + H(+). The catalysed reaction is lithocholate + reduced [NADPH--hemoprotein reductase] + O2 = hyodeoxycholate + oxidized [NADPH--hemoprotein reductase] + H2O + H(+). In terms of biological role, catalyzes the 6 alpha hydroxylation oxidation of taurodeoxycholate to produce the pig specific bile acid taurohyocholic acid. The chain is Taurochenodeoxycholic 6 alpha-hydroxylase (CYP4A21) from Sus scrofa (Pig).